The following is a 542-amino-acid chain: Formate--tetrahydrofolate ligase (542 aa).

Position 53–60 (53–60) interacts with ATP; sequence TPAGEGKT.

Belongs to the formate--tetrahydrofolate ligase family.

The catalysed reaction is (6S)-5,6,7,8-tetrahydrofolate + formate + ATP = (6R)-10-formyltetrahydrofolate + ADP + phosphate. The protein operates within one-carbon metabolism; tetrahydrofolate interconversion. The polypeptide is Formate--tetrahydrofolate ligase (Thermotoga petrophila (strain ATCC BAA-488 / DSM 13995 / JCM 10881 / RKU-1)).